We begin with the raw amino-acid sequence, 550 residues long: Hydroxylamine reductase (550 aa).

4 residues coordinate [2Fe-2S] cluster: cysteine 3, cysteine 6, cysteine 18, and cysteine 25. Hybrid [4Fe-2O-2S] cluster-binding residues include histidine 249, glutamate 273, cysteine 317, cysteine 405, cysteine 433, cysteine 458, glutamate 492, and lysine 494. Cysteine 405 bears the Cysteine persulfide mark.

This sequence belongs to the HCP family. [2Fe-2S] cluster serves as cofactor. It depends on hybrid [4Fe-2O-2S] cluster as a cofactor.

It localises to the cytoplasm. It carries out the reaction A + NH4(+) + H2O = hydroxylamine + AH2 + H(+). Functionally, catalyzes the reduction of hydroxylamine to form NH(3) and H(2)O. This Escherichia coli O139:H28 (strain E24377A / ETEC) protein is Hydroxylamine reductase.